Consider the following 231-residue polypeptide: 5'-methylthioadenosine/S-adenosylhomocysteine nucleosidase (231 aa).

The active-site Proton acceptor is Glu12. Residues Gly78, Val153, and 174-175 (ME) contribute to the substrate site. The active-site Proton donor is the Asp198.

It belongs to the PNP/UDP phosphorylase family. MtnN subfamily.

It catalyses the reaction S-adenosyl-L-homocysteine + H2O = S-(5-deoxy-D-ribos-5-yl)-L-homocysteine + adenine. It carries out the reaction S-methyl-5'-thioadenosine + H2O = 5-(methylsulfanyl)-D-ribose + adenine. The enzyme catalyses 5'-deoxyadenosine + H2O = 5-deoxy-D-ribose + adenine. It participates in amino-acid biosynthesis; L-methionine biosynthesis via salvage pathway; S-methyl-5-thio-alpha-D-ribose 1-phosphate from S-methyl-5'-thioadenosine (hydrolase route): step 1/2. Functionally, catalyzes the irreversible cleavage of the glycosidic bond in both 5'-methylthioadenosine (MTA) and S-adenosylhomocysteine (SAH/AdoHcy) to adenine and the corresponding thioribose, 5'-methylthioribose and S-ribosylhomocysteine, respectively. Also cleaves 5'-deoxyadenosine, a toxic by-product of radical S-adenosylmethionine (SAM) enzymes, into 5-deoxyribose and adenine. The chain is 5'-methylthioadenosine/S-adenosylhomocysteine nucleosidase from Aliivibrio fischeri (strain MJ11) (Vibrio fischeri).